Consider the following 156-residue polypeptide: Protein-export protein SecB (156 aa).

Belongs to the SecB family. Homotetramer, a dimer of dimers. One homotetramer interacts with 1 SecA dimer.

The protein localises to the cytoplasm. One of the proteins required for the normal export of preproteins out of the cell cytoplasm. It is a molecular chaperone that binds to a subset of precursor proteins, maintaining them in a translocation-competent state. It also specifically binds to its receptor SecA. The chain is Protein-export protein SecB from Aeromonas hydrophila subsp. hydrophila (strain ATCC 7966 / DSM 30187 / BCRC 13018 / CCUG 14551 / JCM 1027 / KCTC 2358 / NCIMB 9240 / NCTC 8049).